The sequence spans 234 residues: Ribosomal RNA small subunit methyltransferase G (234 aa).

Residues Gly-96, Leu-101, 119–121 (DAT), 147–148 (VE), and Arg-161 contribute to the S-adenosyl-L-methionine site.

This sequence belongs to the methyltransferase superfamily. RNA methyltransferase RsmG family.

It is found in the cytoplasm. Functionally, specifically methylates the N7 position of a guanine in 16S rRNA. This chain is Ribosomal RNA small subunit methyltransferase G, found in Chlorobium chlorochromatii (strain CaD3).